Here is a 339-residue protein sequence, read N- to C-terminus: HTH-type transcriptional regulator KdgR (339 aa).

The HTH lacI-type domain maps to 9–64; that stretch reads TTIKDVAECAGVSKSTVSRYINGKIDAISPEKVKNIKKAIAELNYRPSKMAQGLKI. A DNA-binding region (H-T-H motif) is located at residues 11–30; it reads IKDVAECAGVSKSTVSRYIN.

Its function is as follows. Transcriptional repressor of the kdgRKAT and kduID operons for pectin utilization. The protein is HTH-type transcriptional regulator KdgR (kdgR) of Bacillus subtilis (strain 168).